We begin with the raw amino-acid sequence, 240 residues long: Venom hemolysin-like protein 1 (240 aa).

The first 18 residues, 1–18 (MQYKLILLVVGLFQASLA), serve as a signal peptide directing secretion. Positions 25-50 (ESVPHPSKDVAPPDTQDSSTQTEVTT) are disordered. Polar residues predominate over residues 39–50 (TQDSSTQTEVTT).

Expressed by the venom gland (anterior main gland) (at protein level).

It is found in the secreted. The sequence is that of Venom hemolysin-like protein 1 from Platymeris rhadamanthus (Red spot assassin bug).